The sequence spans 201 residues: Large ribosomal subunit protein uL4 (201 aa).

Residues 46 to 71 (QKTRAEVIGSGKKPWRQKGTGRARAG) form a disordered region.

Belongs to the universal ribosomal protein uL4 family. Part of the 50S ribosomal subunit.

Functionally, one of the primary rRNA binding proteins, this protein initially binds near the 5'-end of the 23S rRNA. It is important during the early stages of 50S assembly. It makes multiple contacts with different domains of the 23S rRNA in the assembled 50S subunit and ribosome. In terms of biological role, forms part of the polypeptide exit tunnel. This chain is Large ribosomal subunit protein uL4, found in Shewanella sediminis (strain HAW-EB3).